Reading from the N-terminus, the 353-residue chain is Probable tRNA pseudouridine synthase B (353 aa).

D45 functions as the Nucleophile in the catalytic mechanism. A PUA domain is found at 211–287 (YPKIVAKKSA…DHIFVEAKHG (77 aa)). Positions 292–353 (VRDREKDVQR…TGVHRRPGSH (62 aa)) are disordered. Residues 309 to 328 (NIRDAAHGPDSRTGRGRKET) are compositionally biased toward basic and acidic residues. Residues 336–353 (RVRKLQNKTGVHRRPGSH) show a composition bias toward basic residues.

This sequence belongs to the pseudouridine synthase TruB family. Type 2 subfamily.

The catalysed reaction is uridine(55) in tRNA = pseudouridine(55) in tRNA. Could be responsible for synthesis of pseudouridine from uracil-55 in the psi GC loop of transfer RNAs. This is Probable tRNA pseudouridine synthase B from Thermoplasma volcanium (strain ATCC 51530 / DSM 4299 / JCM 9571 / NBRC 15438 / GSS1).